A 101-amino-acid polypeptide reads, in one-letter code: NADH-quinone oxidoreductase subunit K (101 aa).

Transmembrane regions (helical) follow at residues 4–24 (LTHFLVLAAILFAISVLGIFL), 30–50 (IILLMAIELMLLAVNFNFIAF), and 61–81 (IFVFFILTVAAAESAIGLAIL).

It belongs to the complex I subunit 4L family. In terms of assembly, NDH-1 is composed of 14 different subunits. Subunits NuoA, H, J, K, L, M, N constitute the membrane sector of the complex.

The protein localises to the cell inner membrane. The enzyme catalyses a quinone + NADH + 5 H(+)(in) = a quinol + NAD(+) + 4 H(+)(out). NDH-1 shuttles electrons from NADH, via FMN and iron-sulfur (Fe-S) centers, to quinones in the respiratory chain. The immediate electron acceptor for the enzyme in this species is believed to be ubiquinone. Couples the redox reaction to proton translocation (for every two electrons transferred, four hydrogen ions are translocated across the cytoplasmic membrane), and thus conserves the redox energy in a proton gradient. The polypeptide is NADH-quinone oxidoreductase subunit K (Chromobacterium violaceum (strain ATCC 12472 / DSM 30191 / JCM 1249 / CCUG 213 / NBRC 12614 / NCIMB 9131 / NCTC 9757 / MK)).